Here is a 456-residue protein sequence, read N- to C-terminus: Nuclear distribution protein PAC1 (456 aa).

Residues 9–41 (QADELHKSIIAYLSANDLPNTAAALRAELNLTE) enclose the LisH domain. A coiled-coil region spans residues 61-88 (TSIVRLQKKIMDLEARNAALQSELDNLT). WD repeat units follow at residues 114–153 (SHRD…LEMT), 156–197 (GHTR…KNVR), 201–240 (GHDH…CVRS), 243–282 (GHTG…NPEN), 288–348 (GHEH…LMTL), 350–389 (GHDN…KCVK), 394–437 (AHDR…PDVQ), and 439–456 (RCVI…IFAA).

This sequence belongs to the WD repeat LIS1/nudF family. Self-associates. Interacts with NDL1 and dynein.

Its subcellular location is the cytoplasm. It is found in the cytoskeleton. It localises to the spindle pole. Positively regulates the activity of the minus-end directed microtubule motor protein dynein. May enhance dynein-mediated microtubule sliding by targeting dynein to the microtubule plus end. Required for nuclear migration during vegetative growth as well as development. Required for retrograde early endosome (EE) transport from the hyphal tip. Required for localization of dynein to the mitotic spindle poles. Recruits additional proteins to the dynein complex at SPBs. This Ajellomyces capsulatus (strain H143) (Darling's disease fungus) protein is Nuclear distribution protein PAC1.